A 1580-amino-acid chain; its full sequence is Transcriptional activator GLI3 (1580 aa).

The residue at position 1 (Met1) is an N-acetylmethionine. 2 stretches are compositionally biased toward polar residues: residues 1–10 and 58–78; these read MEAQSHSSTT and ITMQPQNVQGLSKVSEEPSTS. The tract at residues 1-79 is disordered; the sequence is MEAQSHSSTT…KVSEEPSTSS (79 aa). Residue Arg175 is modified to Omega-N-methylarginine. The tract at residues 368 to 475 is disordered; that stretch reads QSLGSAFGHS…DKDESKQEPE (108 aa). Polar residues predominate over residues 401–427; it reads NPVQVSSGPSESSQNKPTSESAVSSTG. Residues Lys438 and Lys462 each participate in a glycyl lysine isopeptide (Lys-Gly) (interchain with G-Cter in SUMO2) cross-link. Residues 461–474 show a composition bias toward basic and acidic residues; the sequence is VKEEGDKDESKQEP. C2H2-type zinc fingers lie at residues 480-505, 513-540, 546-570, 576-601, and 607-632; these read TNCHWEGCAREFDTQEQLVHHINNDH, FVCRWLDCSREQKPFKAQYMLVVHMRRH, HKCTFEGCTKAYSRLENLKTHLRSH, YVCEHEGCNKAFSNASDRAKHQNRTH, and YVCKIPGCTKRYTDPSSLRKHVKTVH. Residues 620–728 form a disordered region; it reads DPSSLRKHVK…PISNYSNSGL (109 aa). Basic and acidic residues predominate over residues 632 to 648; it reads HGPEAHVTKKQRGDIHP. Ser664 is subject to Phosphoserine. The segment covering 684 to 699 has biased composition (basic and acidic residues); it reads SKREECLQVKTVKAEK. Over residues 703–726 the composition is skewed to low complexity; that stretch reads SQPSPGGQSSCSSQQSPISNYSNS. The interval 745 to 845 is mediates interaction with DZIP1; it reads DETPIMDSTI…VDVTMLNMLN (101 aa). Residue Lys773 forms a Glycyl lysine isopeptide (Lys-Gly) (interchain with G-Cter in ubiquitin) linkage. A Glycyl lysine isopeptide (Lys-Gly) (interchain with G-Cter in SUMO2); alternate cross-link involves residue Lys779. Lys779 participates in a covalent cross-link: Glycyl lysine isopeptide (Lys-Gly) (interchain with G-Cter in ubiquitin); alternate. Residues Lys784 and Lys800 each participate in a glycyl lysine isopeptide (Lys-Gly) (interchain with G-Cter in ubiquitin) cross-link. Phosphoserine; by PKA occurs at positions 849, 865, 877, and 907. Positions 863–882 are enriched in low complexity; sequence RSSGISPCFSSRRSSEASQA. Residues 863–918 form a disordered region; sequence RSSGISPCFSSRRSSEASQAEGRPQNVSVADSYDPISTDASRRSSEASQSDGLPSL. Polar residues predominate over residues 908–918; that stretch reads EASQSDGLPSL. Phosphoserine; by PKA is present on residues Ser980 and Ser1006. The tract at residues 981–1042 is disordered; it reads DGGAHGYGRR…PAMATSAEKR (62 aa).

This sequence belongs to the GLI C2H2-type zinc-finger protein family. In terms of assembly, the full-length GLI3 form (GLI3FL) interacts with SUFU and this interaction regulates the formation of either repressor or activator forms of GLI3. Its association with SUFU is regulated by Hh signaling and dissociation of the SUFU-GLI3 interaction requires the presence of the ciliary motor KIF3A. Interacts with KIF7. The activator form of GLI3 (GLI3A) but not the repressor form (GLI3R) can interact with TRPS1. The phosphorylated form interacts with BTRC. Interacts with ZIC1. Interacts with ZIC3 (via C2H2-type domains 3, 4 and 5); the interaction enhances its transcriptional activity. Interacts with WRD11; the interaction associates EMX1 with GLI3. Interacts with DZIP1; retains GLI3 within the cytoplasm. In terms of processing, phosphorylated on multiple sites by protein kinase A (PKA) and phosphorylation by PKA primes further phosphorylation by CK1 and GSK3. Phosphorylated by DYRK2 (in vitro). Phosphorylation is essential for its proteolytic processing. Transcriptional repressor GLI3R, a C-terminally truncated form, is generated from the full-length GLI3 protein (GLI3FL/GLI3-190) through proteolytic processing. This process requires PKA-primed phosphorylation of GLI3, ubiquitination of GLI3 and the presence of BTRC. GLI3FL is complexed with SUFU in the cytoplasm and is maintained in a neutral state. Without the Hh signal, the SUFU-GLI3 complex is recruited to cilia, leading to the efficient processing of GLI3FL into GLI3R. GLI3R formation leads to its dissociation from SUFU, allowing it to translocate into the nucleus, and repress Hh target genes. When Hh signaling is initiated, SUFU dissociates from GLI3FL and this has two consequences. First, GLI3R production is halted. Second, free GLI3FL translocates to the nucleus, where it is phosphorylated, destabilized, and converted to a transcriptional activator (GLI3A). Phosphorylated in vitro by ULK3. As to expression, is expressed in a wide variety of normal adult tissues, including lung, colon, spleen, placenta, testis, and myometrium.

It localises to the nucleus. The protein resides in the cytoplasm. It is found in the cell projection. The protein localises to the cilium. Has a dual function as a transcriptional activator and a repressor of the sonic hedgehog (Shh) pathway, and plays a role in limb development. The full-length GLI3 form (GLI3FL) after phosphorylation and nuclear translocation, acts as an activator (GLI3A) while GLI3R, its C-terminally truncated form, acts as a repressor. A proper balance between the GLI3 activator and the repressor GLI3R, rather than the repressor gradient itself or the activator/repressor ratio gradient, specifies limb digit number and identity. In concert with TRPS1, plays a role in regulating the size of the zone of distal chondrocytes, in restricting the zone of PTHLH expression in distal cells and in activating chondrocyte proliferation. Binds to the minimal GLI-consensus sequence 5'-GGGTGGTC-3'. The polypeptide is Transcriptional activator GLI3 (GLI3) (Homo sapiens (Human)).